A 108-amino-acid chain; its full sequence is UPF0102 protein Sama_3355 (108 aa).

Belongs to the UPF0102 family.

The sequence is that of UPF0102 protein Sama_3355 from Shewanella amazonensis (strain ATCC BAA-1098 / SB2B).